The sequence spans 304 residues: Acetyl-coenzyme A carboxylase carboxyl transferase subunit beta (304 aa).

The CoA carboxyltransferase N-terminal domain maps to 23–292; that stretch reads VWTKCDSCGQ…PNPEAPREGV (270 aa). Residues C27, C30, C46, and C49 each contribute to the Zn(2+) site. The segment at 27-49 adopts a C4-type zinc-finger fold; the sequence is CDSCGQVLYRAELERNLEVCPKC. The interval 284-304 is disordered; the sequence is NPEAPREGVVVPPVPDQEPEA. The segment covering 295 to 304 has biased composition (pro residues); it reads PPVPDQEPEA.

It belongs to the AccD/PCCB family. Acetyl-CoA carboxylase is a heterohexamer composed of biotin carboxyl carrier protein (AccB), biotin carboxylase (AccC) and two subunits each of ACCase subunit alpha (AccA) and ACCase subunit beta (AccD). Zn(2+) serves as cofactor.

The protein localises to the cytoplasm. It catalyses the reaction N(6)-carboxybiotinyl-L-lysyl-[protein] + acetyl-CoA = N(6)-biotinyl-L-lysyl-[protein] + malonyl-CoA. It functions in the pathway lipid metabolism; malonyl-CoA biosynthesis; malonyl-CoA from acetyl-CoA: step 1/1. Its function is as follows. Component of the acetyl coenzyme A carboxylase (ACC) complex. Biotin carboxylase (BC) catalyzes the carboxylation of biotin on its carrier protein (BCCP) and then the CO(2) group is transferred by the transcarboxylase to acetyl-CoA to form malonyl-CoA. In Escherichia coli O139:H28 (strain E24377A / ETEC), this protein is Acetyl-coenzyme A carboxylase carboxyl transferase subunit beta.